The primary structure comprises 122 residues: Elsinochromes biosynthesis cluster protein HP4 (122 aa).

Part of the gene cluster that mediates the biosynthesis of elsinochromes, pigments consisting of at least four interconvertible tautomers (A, B, C and D) that have a core phenolic quinone to which various side chains are attached and which play an important role in fungal pathogenesis. The non-reducing polyketide synthase PKS1 was proposed to iteratively catalyze decarboxylation between acetyl-CoA and malonyl-CoA subunits for polyketide chain elongation. The released polyketide undergoes cyclization to form an aromatic ring, and proceeds via serial modification steps to produce the heptaketide back- bone of elsinochrome. As elsinochrome has a symmetrical structure, two identical heptaketides are fused to form a core 1,2-dihydrobenzo-perylene ring structure, which can then be successively modified to produce the various derivatives of elsinochrome. Some of these reactions may be cooperatively carried out, at least in part, by the products of RDT1, OXR1 and PKS1. PRF1, embedded within the elsinochrome cluster possibly functions to stabilize some of the biosynthetic enzymes required for elsinochrome production. As prefoldin is a hexamer containing 2 a and 4 b subunits, additional prefoldin subunits, whose coding genes may not immediately link to the elsinochrome biosynthetic gene cluster, are required to fulfill the chaperone function. In addition, no methyltransferase-coding gene exists within the biosynthetic gene cluster, even though elsinochrome has four methyl groups at positions C3, C7, C8 and C12. Apparently, the identified gene cluster does not contain the entire entourage of genes responsible for elsinochrome biosynthesis. Once elsinochrome is synthesized, it must be exported outside the fungal cells, which is probably accomplished by the ECT1 transporter, to avoid toxicity. In Elsinoe fawcettii (Citrus scab fungus), this protein is Elsinochromes biosynthesis cluster protein HP4.